The following is a 366-amino-acid chain: Glutamate 5-kinase (366 aa).

Residue lysine 17 participates in ATP binding. Serine 57, aspartate 144, and asparagine 156 together coordinate substrate. ATP contacts are provided by residues 176–177 (SD) and 216–222 (TGGMASK). The PUA domain occupies 278 to 352 (QGILHIDEGA…GKSTQELPAE (75 aa)).

The protein belongs to the glutamate 5-kinase family.

It is found in the cytoplasm. It catalyses the reaction L-glutamate + ATP = L-glutamyl 5-phosphate + ADP. Its pathway is amino-acid biosynthesis; L-proline biosynthesis; L-glutamate 5-semialdehyde from L-glutamate: step 1/2. In terms of biological role, catalyzes the transfer of a phosphate group to glutamate to form L-glutamate 5-phosphate. The polypeptide is Glutamate 5-kinase (Rhodococcus opacus (strain B4)).